The chain runs to 425 residues: Serine--tRNA ligase (425 aa).

L-serine is bound at residue 231-233; it reads TAE. An ATP-binding site is contributed by 262-264; sequence RRE. Glu285 serves as a coordination point for L-serine. 349–352 contributes to the ATP binding site; that stretch reads EISS. Residue Ser385 coordinates L-serine.

The protein belongs to the class-II aminoacyl-tRNA synthetase family. Type-1 seryl-tRNA synthetase subfamily. Homodimer. The tRNA molecule binds across the dimer.

It is found in the cytoplasm. It carries out the reaction tRNA(Ser) + L-serine + ATP = L-seryl-tRNA(Ser) + AMP + diphosphate + H(+). The catalysed reaction is tRNA(Sec) + L-serine + ATP = L-seryl-tRNA(Sec) + AMP + diphosphate + H(+). Its pathway is aminoacyl-tRNA biosynthesis; selenocysteinyl-tRNA(Sec) biosynthesis; L-seryl-tRNA(Sec) from L-serine and tRNA(Sec): step 1/1. Its function is as follows. Catalyzes the attachment of serine to tRNA(Ser). Is also able to aminoacylate tRNA(Sec) with serine, to form the misacylated tRNA L-seryl-tRNA(Sec), which will be further converted into selenocysteinyl-tRNA(Sec). The sequence is that of Serine--tRNA ligase from Aquifex aeolicus (strain VF5).